A 211-amino-acid polypeptide reads, in one-letter code: Large ribosomal subunit protein bL25 (211 aa).

Positions histidine 188–glutamine 211 are disordered. The span at glutamate 200–glutamine 211 shows a compositional bias: low complexity.

It belongs to the bacterial ribosomal protein bL25 family. CTC subfamily. Part of the 50S ribosomal subunit; part of the 5S rRNA/L5/L18/L25 subcomplex. Contacts the 5S rRNA. Binds to the 5S rRNA independently of L5 and L18.

This is one of the proteins that binds to the 5S RNA in the ribosome where it forms part of the central protuberance. The polypeptide is Large ribosomal subunit protein bL25 (Desulforudis audaxviator (strain MP104C)).